The chain runs to 343 residues: Undecaprenyl-diphosphatase 2 (343 aa).

A run of 4 helical transmembrane segments spans residues 21-41, 57-77, 104-124, and 129-149; these read LFPV…GGSW, PYLT…LVFF, LAWL…ALEH, and LFAK…ILLA. The span at 179 to 193 shows a compositional bias: low complexity; sequence VPAPATVPTQTTSAP. Positions 179-202 are disordered; that stretch reads VPAPATVPTQTTSAPGGRATARHT. 4 helical membrane-spanning segments follow: residues 225–245, 265–285, 294–314, and 322–342; these read AGVI…RSGI, FLLA…ALAG, QVIL…RFLV, and LTPF…RFAI.

It belongs to the UppP family.

The protein localises to the cell membrane. The catalysed reaction is di-trans,octa-cis-undecaprenyl diphosphate + H2O = di-trans,octa-cis-undecaprenyl phosphate + phosphate + H(+). Catalyzes the dephosphorylation of undecaprenyl diphosphate (UPP). Confers resistance to bacitracin. The chain is Undecaprenyl-diphosphatase 2 from Frankia alni (strain DSM 45986 / CECT 9034 / ACN14a).